We begin with the raw amino-acid sequence, 798 residues long: Phenylalanine--tRNA ligase beta subunit (798 aa).

The tRNA-binding domain maps to 39-148; that stretch reads FDAIEPIVVG…ESFRIGARLV (110 aa). The B5 domain maps to 402 to 478; the sequence is WQAPVLRFRR…RVRGMDTIEP (77 aa). Mg(2+)-binding residues include D456, D462, E465, and E466. The FDX-ACB domain maps to 708–798; sequence PVYPPVRRDI…SLVEKLPVRI (91 aa).

The protein belongs to the phenylalanyl-tRNA synthetase beta subunit family. Type 1 subfamily. As to quaternary structure, tetramer of two alpha and two beta subunits. Requires Mg(2+) as cofactor.

Its subcellular location is the cytoplasm. The enzyme catalyses tRNA(Phe) + L-phenylalanine + ATP = L-phenylalanyl-tRNA(Phe) + AMP + diphosphate + H(+). This chain is Phenylalanine--tRNA ligase beta subunit, found in Nitratidesulfovibrio vulgaris (strain ATCC 29579 / DSM 644 / CCUG 34227 / NCIMB 8303 / VKM B-1760 / Hildenborough) (Desulfovibrio vulgaris).